A 144-amino-acid polypeptide reads, in one-letter code: Large ribosomal subunit protein uL11 (144 aa).

The protein belongs to the universal ribosomal protein uL11 family. In terms of assembly, part of the ribosomal stalk of the 50S ribosomal subunit. Interacts with L10 and the large rRNA to form the base of the stalk. L10 forms an elongated spine to which L12 dimers bind in a sequential fashion forming a multimeric L10(L12)X complex. Post-translationally, one or more lysine residues are methylated.

Forms part of the ribosomal stalk which helps the ribosome interact with GTP-bound translation factors. This Corynebacterium efficiens (strain DSM 44549 / YS-314 / AJ 12310 / JCM 11189 / NBRC 100395) protein is Large ribosomal subunit protein uL11.